A 429-amino-acid chain; its full sequence is UDP-N-acetylglucosamine 1-carboxyvinyltransferase (429 aa).

A phosphoenolpyruvate-binding site is contributed by 22–23; that stretch reads KN. Residue Arg-102 participates in UDP-N-acetyl-alpha-D-glucosamine binding. The Proton donor role is filled by Cys-126. Cys-126 is subject to 2-(S-cysteinyl)pyruvic acid O-phosphothioketal. UDP-N-acetyl-alpha-D-glucosamine contacts are provided by residues 131–135, Asp-316, and Ile-338; that span reads RPVDL.

It belongs to the EPSP synthase family. MurA subfamily.

It localises to the cytoplasm. The enzyme catalyses phosphoenolpyruvate + UDP-N-acetyl-alpha-D-glucosamine = UDP-N-acetyl-3-O-(1-carboxyvinyl)-alpha-D-glucosamine + phosphate. It functions in the pathway cell wall biogenesis; peptidoglycan biosynthesis. Functionally, cell wall formation. Adds enolpyruvyl to UDP-N-acetylglucosamine. This is UDP-N-acetylglucosamine 1-carboxyvinyltransferase from Rhodopseudomonas palustris (strain BisB18).